Here is a 423-residue protein sequence, read N- to C-terminus: Ornithine cyclodeaminase (423 aa).

Residues N241, A242, D320, T352, M353, L354, H355, D373, D396, and V397 each coordinate NAD(+).

The protein belongs to the AgrE/ArgZ ornithine cyclodeaminase family. The cofactor is NAD(+).

The enzyme catalyses L-ornithine = L-proline + NH4(+). Its function is as follows. Catalyzes the conversion of ornithine to proline, with the release of ammonia. The chain is Ornithine cyclodeaminase from Methanocaldococcus jannaschii (strain ATCC 43067 / DSM 2661 / JAL-1 / JCM 10045 / NBRC 100440) (Methanococcus jannaschii).